Here is a 348-residue protein sequence, read N- to C-terminus: Ion-translocating oxidoreductase complex subunit D (348 aa).

The Cytoplasmic segment spans residues 1–22 (MAFFIASSPHLRSKRSTADVMR). A run of 2 helical transmembrane segments spans residues 23–43 (WVLV…GYGT) and 44–64 (LIQL…IMLL). At 65 to 71 (RKRSPIS) the chain is on the cytoplasmic side. Residues 72-91 (ALRDYSAVVTAWLLAVAIPP) form a helical membrane-spanning segment. Residues 92–94 (LSP) lie on the Periplasmic side of the membrane. The chain crosses the membrane as a helical span at residues 95–117 (WWVVVIGLIFAIVIAKHLYGGLG). The Cytoplasmic portion of the chain corresponds to 118-125 (QNPFNPAM). Residues 126–146 (IAYVVLLISFPVQMTSWMAPI) traverse the membrane as a helical segment. Residues 147-213 (KLTAEPSSLV…ETLTQPQFSG (67 aa)) are Periplasmic-facing. Thr-187 is subject to FMN phosphoryl threonine. A helical transmembrane segment spans residues 214–234 (FAGIGWEWVNIAYLLGGLILL). Residues 235–242 (KLRIIRWH) lie on the Cytoplasmic side of the membrane. Residues 243-263 (IPVAMLAGLVFTALLAQLFAP) form a helical membrane-spanning segment. At 264–265 (GT) the chain is on the periplasmic side. Residues 266–286 (TASPMIHLLSGATMLGAFFIA) form a helical membrane-spanning segment. Over 287–299 (TDPVSASTTDKGR) the chain is Cytoplasmic. Helical transmembrane passes span 300–320 (LIYG…GGFP) and 321–341 (DGVA…DYYT). Residues 342–348 (KPRTYGH) lie on the Cytoplasmic side of the membrane.

Belongs to the NqrB/RnfD family. As to quaternary structure, the complex is composed of six subunits: RnfA, RnfB, RnfC, RnfD, RnfE and RnfG. The cofactor is FMN.

The protein localises to the cell inner membrane. In terms of biological role, part of a membrane-bound complex that couples electron transfer with translocation of ions across the membrane. The protein is Ion-translocating oxidoreductase complex subunit D of Vibrio cholerae serotype O1 (strain ATCC 39541 / Classical Ogawa 395 / O395).